The chain runs to 469 residues: NADH-quinone oxidoreductase subunit N (469 aa).

The next 14 membrane-spanning stretches (helical) occupy residues 9–29 (PLLM…LIAG), 40–60 (VGVM…VQMV), 76–96 (ATGV…AVAG), 105–125 (EAET…LAGA), 128–148 (LLLL…LVGL), 162–182 (YLMG…LYGL), 201–221 (VAVA…AGGV), 234–254 (ANAT…LVAL), 265–285 (LAWP…GNLA), 294–316 (RLLG…VAGA), 327–347 (YLGG…ALPG), 365–385 (AAAL…AVFI), 402–422 (LAVV…RWII), and 448–468 (VLAA…WQLV).

This sequence belongs to the complex I subunit 2 family. NDH-1 is composed of 14 different subunits. Subunits NuoA, H, J, K, L, M, N constitute the membrane sector of the complex.

Its subcellular location is the cell membrane. It carries out the reaction a quinone + NADH + 5 H(+)(in) = a quinol + NAD(+) + 4 H(+)(out). Functionally, NDH-1 shuttles electrons from NADH, via FMN and iron-sulfur (Fe-S) centers, to quinones in the respiratory chain. The immediate electron acceptor for the enzyme in this species is believed to be a menaquinone. Couples the redox reaction to proton translocation (for every two electrons transferred, four hydrogen ions are translocated across the cytoplasmic membrane), and thus conserves the redox energy in a proton gradient. The protein is NADH-quinone oxidoreductase subunit N of Mycobacterium sp. (strain JLS).